A 646-amino-acid chain; its full sequence is Chaperone protein DnaK (646 aa).

Phosphothreonine; by autocatalysis is present on threonine 198. The tract at residues glutamate 603–lysine 646 is disordered. Low complexity predominate over residues alanine 618–glutamine 627.

This sequence belongs to the heat shock protein 70 family.

Functionally, acts as a chaperone. The protein is Chaperone protein DnaK of Acinetobacter baumannii (strain ACICU).